We begin with the raw amino-acid sequence, 229 residues long: Flagellar brake protein YcgR (229 aa).

Residues 134 to 218 enclose the PilZ domain; it reads QLSLRVLDVS…GERALQRYID (85 aa).

It belongs to the YcgR family. As to quaternary structure, monomer. Interacts with the flagellar basal bodies.

The protein localises to the bacterial flagellum basal body. In terms of biological role, acts as a flagellar brake, regulating swimming and swarming in a bis-(3'-5') cyclic diguanylic acid (c-di-GMP)-dependent manner. Binds 1 c-di-GMP dimer per subunit. Increasing levels of c-di-GMP lead to decreased motility. This chain is Flagellar brake protein YcgR, found in Methylibium petroleiphilum (strain ATCC BAA-1232 / LMG 22953 / PM1).